The chain runs to 187 residues: Adenylate kinase (187 aa).

10-15 (GSGKGT) lines the ATP pocket. Positions 30-59 (STGDLLRAEVAAGSPLGVKAKEVMARGDLV) are NMP. AMP is bound by residues T31, R36, 57–59 (DLV), 85–88 (GYPR), and Q92. The LID stretch occupies residues 126–136 (GRAKAEGREDD). R127 is a binding site for ATP. Residues R133 and R144 each contribute to the AMP site. G172 is an ATP binding site.

It belongs to the adenylate kinase family. As to quaternary structure, monomer.

Its subcellular location is the cytoplasm. It catalyses the reaction AMP + ATP = 2 ADP. The protein operates within purine metabolism; AMP biosynthesis via salvage pathway; AMP from ADP: step 1/1. Its function is as follows. Catalyzes the reversible transfer of the terminal phosphate group between ATP and AMP. Plays an important role in cellular energy homeostasis and in adenine nucleotide metabolism. This chain is Adenylate kinase, found in Xanthomonas campestris pv. campestris (strain B100).